The following is a 261-amino-acid chain: 5'-nucleotidase SurE (261 aa).

Asp8, Asp9, Ser43, and Asn96 together coordinate a divalent metal cation.

It belongs to the SurE nucleotidase family. The cofactor is a divalent metal cation.

The protein resides in the cytoplasm. The catalysed reaction is a ribonucleoside 5'-phosphate + H2O = a ribonucleoside + phosphate. Its function is as follows. Nucleotidase that shows phosphatase activity on nucleoside 5'-monophosphates. This is 5'-nucleotidase SurE from Roseobacter denitrificans (strain ATCC 33942 / OCh 114) (Erythrobacter sp. (strain OCh 114)).